Reading from the N-terminus, the 380-residue chain is Cytochrome b (380 aa).

4 consecutive transmembrane segments (helical) span residues 34–54 (FGSL…LLAM), 78–99 (WLIR…FLHI), 114–134 (WNTG…GYVL), and 179–199 (FFAL…THLM). Residues His-84 and His-98 each contribute to the heme b site. Heme b is bound by residues His-183 and His-197. His-202 serves as a coordination point for a ubiquinone. 4 helical membrane passes run 227–247 (LKDI…ALFS), 289–309 (LGGV…PFLH), 321–341 (LSQA…WVGS), and 348–368 (FIII…ILFP).

Belongs to the cytochrome b family. The cytochrome bc1 complex contains 11 subunits: 3 respiratory subunits (MT-CYB, CYC1 and UQCRFS1), 2 core proteins (UQCRC1 and UQCRC2) and 6 low-molecular weight proteins (UQCRH/QCR6, UQCRB/QCR7, UQCRQ/QCR8, UQCR10/QCR9, UQCR11/QCR10 and a cleavage product of UQCRFS1). This cytochrome bc1 complex then forms a dimer. Heme b is required as a cofactor.

Its subcellular location is the mitochondrion inner membrane. Component of the ubiquinol-cytochrome c reductase complex (complex III or cytochrome b-c1 complex) that is part of the mitochondrial respiratory chain. The b-c1 complex mediates electron transfer from ubiquinol to cytochrome c. Contributes to the generation of a proton gradient across the mitochondrial membrane that is then used for ATP synthesis. The polypeptide is Cytochrome b (MT-CYB) (Syrmaticus reevesii (Reeves's pheasant)).